The chain runs to 320 residues: GDP-L-fucose synthase (320 aa).

14 to 20 (GGSGLVG) contacts NADP(+). The active-site Proton donor/acceptor is tyrosine 142. Residues lysine 146, 169-172 (PTNI), and histidine 185 contribute to the NADP(+) site. Residues lysine 193, arginine 214, and aspartate 276 each coordinate substrate.

The protein belongs to the NAD(P)-dependent epimerase/dehydratase family. Fucose synthase subfamily.

The enzyme catalyses GDP-beta-L-fucose + NADP(+) = GDP-4-dehydro-alpha-D-rhamnose + NADPH + H(+). It functions in the pathway nucleotide-sugar biosynthesis; GDP-L-fucose biosynthesis via de novo pathway; GDP-L-fucose from GDP-alpha-D-mannose: step 2/2. Its function is as follows. Catalyzes the two-step NADP-dependent conversion of GDP-4-dehydro-6-deoxy-D-mannose to GDP-fucose, involving an epimerase and a reductase reaction. This is GDP-L-fucose synthase (ger) from Dictyostelium discoideum (Social amoeba).